A 130-amino-acid polypeptide reads, in one-letter code: Putative antitoxin VapB50 (130 aa).

In terms of biological role, possibly the antitoxin component of a type II toxin-antitoxin (TA) system. Its cognate toxin is VapC50. This chain is Putative antitoxin VapB50, found in Mycobacterium tuberculosis (strain ATCC 25618 / H37Rv).